The following is a 208-amino-acid chain: Small ribosomal subunit protein uS4 (208 aa).

An S4 RNA-binding domain is found at 98-160; the sequence is QRLDNVVYRM…SKNNSQIVRA (63 aa).

This sequence belongs to the universal ribosomal protein uS4 family. Part of the 30S ribosomal subunit. Contacts protein S5. The interaction surface between S4 and S5 is involved in control of translational fidelity.

Its function is as follows. One of the primary rRNA binding proteins, it binds directly to 16S rRNA where it nucleates assembly of the body of the 30S subunit. Functionally, with S5 and S12 plays an important role in translational accuracy. The chain is Small ribosomal subunit protein uS4 from Sulfurimonas denitrificans (strain ATCC 33889 / DSM 1251) (Thiomicrospira denitrificans (strain ATCC 33889 / DSM 1251)).